A 330-amino-acid chain; its full sequence is Putative aminohydrolase AF_1775 (330 aa).

Positions 54, 56, 181, and 253 each coordinate Zn(2+).

It belongs to the metallo-dependent hydrolases superfamily. ATZ/TRZ family.

This is Putative aminohydrolase AF_1775 from Archaeoglobus fulgidus (strain ATCC 49558 / DSM 4304 / JCM 9628 / NBRC 100126 / VC-16).